A 416-amino-acid chain; its full sequence is F-box/FBD/LRR-repeat protein At1g13570 (416 aa).

Residues 5–53 form the F-box domain; the sequence is PDFISDLPQSIIENILTRLSIRDAIRTSVLSSKWRYKWSTLTDLVFDEK. LRR repeat units follow at residues 115 to 142, 164 to 189, 203 to 229, 238 to 263, and 294 to 321; these read VLKL…ELCH, QILV…SLSY, MYLY…SVSM, FEQS…VGYI, and CFED…KVSA. One can recognise an FBD domain in the interval 346–384; it reads LPSLESVKITDASGIRYELEFIRFLLGTSPVLETVTVSS.

The polypeptide is F-box/FBD/LRR-repeat protein At1g13570 (Arabidopsis thaliana (Mouse-ear cress)).